Consider the following 90-residue polypeptide: Large ribosomal subunit protein bL27 (90 aa).

Positions 1–21 (MAHTKAGGTTRNSRDSAGRRL) are disordered.

The protein belongs to the bacterial ribosomal protein bL27 family.

This is Large ribosomal subunit protein bL27 from Metamycoplasma arthritidis (strain 158L3-1) (Mycoplasma arthritidis).